The chain runs to 725 residues: Eukaryotic translation initiation factor 3 subunit B (725 aa).

The 85-residue stretch at 46 to 130 (NCVFIAGIPV…HTFTARSFKD (85 aa)) folds into the RRM domain. 6 WD repeats span residues 202-240 (RANW…RAHR), 242-280 (AHTN…SLRI), 354-395 (VNIE…SMQR), 462-504 (PLSE…HAPK), 510-552 (DAGV…AKRT), and 554-594 (VIEH…FTFQ).

The protein belongs to the eIF-3 subunit B family. Component of the eukaryotic translation initiation factor 3 (eIF-3) complex.

The protein localises to the cytoplasm. RNA-binding component of the eukaryotic translation initiation factor 3 (eIF-3) complex, which is involved in protein synthesis of a specialized repertoire of mRNAs and, together with other initiation factors, stimulates binding of mRNA and methionyl-tRNAi to the 40S ribosome. The eIF-3 complex specifically targets and initiates translation of a subset of mRNAs involved in cell proliferation. The chain is Eukaryotic translation initiation factor 3 subunit B from Caenorhabditis elegans.